A 953-amino-acid polypeptide reads, in one-letter code: Catenin alpha-2 (953 aa).

Threonine 632 is modified (phosphothreonine). Residues serine 640, serine 651, and serine 901 each carry the phosphoserine modification. Residues 912–927 show a composition bias toward basic and acidic residues; that stretch reads EKKPLVKREKPEEFQT. The disordered stretch occupies residues 912–939; that stretch reads EKKPLVKREKPEEFQTRVRRGSQKKHIS. Positions 928–938 are enriched in basic residues; the sequence is RVRRGSQKKHI. Serine 939 is subject to Phosphoserine.

The protein belongs to the vinculin/alpha-catenin family. In terms of assembly, interacts with CDH1 and CDH2. Interacts with ZNF639; recruits CTNNA2 to the nucleus. Interacts with F-actin. Expressed almost exclusively in the nervous system.

The protein localises to the cell membrane. The protein resides in the cytoplasm. It is found in the cytoskeleton. It localises to the cell junction. Its subcellular location is the adherens junction. The protein localises to the cell projection. The protein resides in the axon. It is found in the nucleus. May function as a linker between cadherin adhesion receptors and the cytoskeleton to regulate cell-cell adhesion and differentiation in the nervous system. Required for proper regulation of cortical neuronal migration and neurite growth. It acts as a negative regulator of Arp2/3 complex activity and Arp2/3-mediated actin polymerization. It thereby suppresses excessive actin branching which would impair neurite growth and stability. Regulates morphological plasticity of synapses and cerebellar and hippocampal lamination during development. Functions in the control of startle modulation. The polypeptide is Catenin alpha-2 (Ctnna2) (Mus musculus (Mouse)).